The chain runs to 253 residues: Cell division protein ZapD (253 aa).

The protein belongs to the ZapD family. As to quaternary structure, interacts with FtsZ.

Its subcellular location is the cytoplasm. Functionally, cell division factor that enhances FtsZ-ring assembly. Directly interacts with FtsZ and promotes bundling of FtsZ protofilaments, with a reduction in FtsZ GTPase activity. The sequence is that of Cell division protein ZapD from Bordetella bronchiseptica (strain ATCC BAA-588 / NCTC 13252 / RB50) (Alcaligenes bronchisepticus).